We begin with the raw amino-acid sequence, 304 residues long: Acetyl-coenzyme A carboxylase carboxyl transferase subunit beta (304 aa).

In terms of domain architecture, CoA carboxyltransferase N-terminal spans 23–292 (VWTKCDSCGQ…PNPEAPREGV (270 aa)). Cysteine 27, cysteine 30, cysteine 46, and cysteine 49 together coordinate Zn(2+). Residues 27–49 (CDSCGQVLYRAELERNLEVCPKC) form a C4-type zinc finger. The tract at residues 284–304 (NPEAPREGVVVPPVPDQEPEA) is disordered. A compositionally biased stretch (pro residues) spans 295 to 304 (PPVPDQEPEA).

It belongs to the AccD/PCCB family. Acetyl-CoA carboxylase is a heterohexamer composed of biotin carboxyl carrier protein (AccB), biotin carboxylase (AccC) and two subunits each of ACCase subunit alpha (AccA) and ACCase subunit beta (AccD). The cofactor is Zn(2+).

It localises to the cytoplasm. It carries out the reaction N(6)-carboxybiotinyl-L-lysyl-[protein] + acetyl-CoA = N(6)-biotinyl-L-lysyl-[protein] + malonyl-CoA. Its pathway is lipid metabolism; malonyl-CoA biosynthesis; malonyl-CoA from acetyl-CoA: step 1/1. In terms of biological role, component of the acetyl coenzyme A carboxylase (ACC) complex. Biotin carboxylase (BC) catalyzes the carboxylation of biotin on its carrier protein (BCCP) and then the CO(2) group is transferred by the transcarboxylase to acetyl-CoA to form malonyl-CoA. In Shigella flexneri, this protein is Acetyl-coenzyme A carboxylase carboxyl transferase subunit beta.